We begin with the raw amino-acid sequence, 201 residues long: uncharacterized protein (201 aa).

This is an uncharacterized protein from Bacillus subtilis (strain 168).